Here is a 542-residue protein sequence, read N- to C-terminus: Chaperonin GroEL (542 aa).

ATP is bound by residues 29 to 32 (TLGP), 86 to 90 (DGTTT), G413, 476 to 478 (NAA), and D492. Residues 521–542 (QPDENGPAAGPDMGMGGMGGMM) are disordered. The segment covering 533–542 (MGMGGMGGMM) has biased composition (gly residues).

It belongs to the chaperonin (HSP60) family. In terms of assembly, forms a cylinder of 14 subunits composed of two heptameric rings stacked back-to-back. Interacts with the co-chaperonin GroES.

The protein localises to the cytoplasm. It carries out the reaction ATP + H2O + a folded polypeptide = ADP + phosphate + an unfolded polypeptide.. In terms of biological role, together with its co-chaperonin GroES, plays an essential role in assisting protein folding. The GroEL-GroES system forms a nano-cage that allows encapsulation of the non-native substrate proteins and provides a physical environment optimized to promote and accelerate protein folding. This chain is Chaperonin GroEL, found in Listeria innocua serovar 6a (strain ATCC BAA-680 / CLIP 11262).